A 726-amino-acid chain; its full sequence is Kinesin-like protein KIN-10B (726 aa).

Disordered regions lie at residues 1–20 (MEQQ…RVVA), 60–82 (AATA…QQQK), and 402–423 (KNAR…TANR). Positions 15 to 359 (GVRVVARICP…LALASRSSQV (345 aa)) constitute a Kinesin motor domain. The segment covering 408 to 423 (FNNSGVKGGQTPTANR) has biased composition (polar residues).

This sequence belongs to the TRAFAC class myosin-kinesin ATPase superfamily. Kinesin family. KIN-10 subfamily.

This chain is Kinesin-like protein KIN-10B, found in Oryza sativa subsp. japonica (Rice).